The following is a 56-amino-acid chain: Male determiner protein Yob (56 aa).

Its function is as follows. Male determiner protein (M-factor) that controls male somatic sexual differentiation. Acts as a dominant factor that regulates the mRNA splicing of doublesex (dsx) transcripts and promotes expression of male splice forms of dsx. The polypeptide is Male determiner protein Yob (Anopheles gambiae (African malaria mosquito)).